The sequence spans 123 residues: Large ribosomal subunit protein uL14 (123 aa).

It belongs to the universal ribosomal protein uL14 family. In terms of assembly, part of the 50S ribosomal subunit. Forms a cluster with proteins L3 and L19. In the 70S ribosome, L14 and L19 interact and together make contacts with the 16S rRNA in bridges B5 and B8.

Binds to 23S rRNA. Forms part of two intersubunit bridges in the 70S ribosome. In Escherichia coli O6:K15:H31 (strain 536 / UPEC), this protein is Large ribosomal subunit protein uL14.